We begin with the raw amino-acid sequence, 1447 residues long: Netrin receptor DCC (1447 aa).

Residues 1 to 25 (MENSLRCVWVPKLAFVLFGASLFSA) form the signal peptide. 4 consecutive Ig-like C2-type domains span residues 26–135 (HLQV…AKVA), 139–229 (PLRF…AEVR), 234–326 (PGLH…AELT), and 331–416 (PWFL…AQLI). Over 26–1097 (HLQVTGFQIK…GSVTPQKNSN (1072 aa)) the chain is Extracellular. Cystine bridges form between C61–C117, C161–C212, and C261–C310. N94 carries N-linked (GlcNAc...) asparagine glycosylation. N299 and N318 each carry an N-linked (GlcNAc...) asparagine glycan. Residues C352 and C400 are joined by a disulfide bond. Fibronectin type-III domains are found at residues 431-524 (APRD…TQPE), 530-620 (PVEN…TLSD), 625-718 (PPQN…TPEN), 728-821 (QPSS…TDPT), 846-942 (PPVG…TYEA), and 947-1044 (APKD…TLKV). N478 carries N-linked (GlcNAc...) asparagine glycosylation. N-linked (GlcNAc...) asparagine glycans are attached at residues N628 and N702. Residues 1098-1122 (LLVIIVVTVGVITVLVVVIVAVICT) traverse the membrane as a helical segment. The Cytoplasmic segment spans residues 1123–1447 (RRSSAQQRKK…QLNAITGSAF (325 aa)). Disordered regions lie at residues 1126 to 1152 (SAQQ…RPPD) and 1165 to 1222 (IEKP…TLER). Residues 1129 to 1143 (QRKKRATHSAGKRKG) show a composition bias toward basic residues. Residue S1178 is modified to Phosphoserine; by MAPK1. Residues 1179 to 1221 (PIQSCQDLTPVSHSQSETQLGSKSTSHSGQDTEEAGSSMSTLE) show a composition bias toward polar residues. T1187 carries the post-translational modification Phosphothreonine; by MAPK1. S1267 carries the phosphoserine; by MAPK1 modification. 2 disordered regions span residues 1288–1330 (SVDR…PSRT) and 1394–1419 (LLPV…SANV). Residues 1297–1310 (RSQSVSEGPTTQQP) show a composition bias toward polar residues. Residues 1432–1439 (LEGLMKQL) are interaction with MYO10.

Belongs to the immunoglobulin superfamily. DCC family. In terms of assembly, interacts with the cytoplasmic part of UNC5A, UNC5B, UNC5C and probably UNC5D. Interacts with DSCAM. Interacts with PTK2/FAK1 and MAPK1. Interacts with NTN1. Interacts with MYO10. Interacts with CBLN4; this interaction can be competed by NTN1. Interacts with SIAH1 and SIAH2. Ubiquitinated; mediated by SIAH1 or SIAH2 and leading to its subsequent proteasomal degradation. Found in axons of the central and peripheral nervous system and in differentiated cell types of the intestine. Not expressed in colorectal tumor cells that lost their capacity to differentiate into mucus producing cells.

Its subcellular location is the membrane. Its function is as follows. Receptor for netrin required for axon guidance. Mediates axon attraction of neuronal growth cones in the developing nervous system upon ligand binding. Its association with UNC5 proteins may trigger signaling for axon repulsion. It also acts as a dependence receptor required for apoptosis induction when not associated with netrin ligand. Implicated as a tumor suppressor gene. The sequence is that of Netrin receptor DCC (DCC) from Homo sapiens (Human).